Reading from the N-terminus, the 98-residue chain is NADH-ubiquinone oxidoreductase chain 4L (98 aa).

3 consecutive transmembrane segments (helical) span residues 1 to 21 (MSPV…GLAF), 26 to 46 (LLSA…AIAL), and 61 to 81 (MILL…LVAA).

This sequence belongs to the complex I subunit 4L family.

The protein resides in the mitochondrion membrane. It carries out the reaction a ubiquinone + NADH + 5 H(+)(in) = a ubiquinol + NAD(+) + 4 H(+)(out). In terms of biological role, core subunit of the mitochondrial membrane respiratory chain NADH dehydrogenase (Complex I) which catalyzes electron transfer from NADH through the respiratory chain, using ubiquinone as an electron acceptor. Part of the enzyme membrane arm which is embedded in the lipid bilayer and involved in proton translocation. The chain is NADH-ubiquinone oxidoreductase chain 4L (MT-ND4L) from Squalus acanthias (Spiny dogfish).